Here is a 537-residue protein sequence, read N- to C-terminus: Cytochrome P450 86A8 (537 aa).

A helical membrane pass occupies residues 3 to 23 (ISTALMILSAITAYFLWLTFI). Cys458 serves as a coordination point for heme.

Belongs to the cytochrome P450 family. Requires heme as cofactor. Expressed in leaves, stems, flowers and siliques. Expressed at low levels in roots.

The protein resides in the membrane. The catalysed reaction is an organic molecule + reduced [NADPH--hemoprotein reductase] + O2 = an alcohol + oxidized [NADPH--hemoprotein reductase] + H2O + H(+). Functionally, catalyzes the omega-hydroxylation of various fatty acids (FA). Acts on saturated and unsaturated fatty acids with chain lengths from C12 to C18. May be involved in the biosynthesis of cutin in the epidermis which prevents post-genital organ fusions. Hydroxylated FAs may be important for trichome differentiation, establishment of apical dominance and senescence. The chain is Cytochrome P450 86A8 (CYP86A8) from Arabidopsis thaliana (Mouse-ear cress).